A 422-amino-acid polypeptide reads, in one-letter code: UDP-N-acetylglucosamine 1-carboxyvinyltransferase (422 aa).

22 to 23 (KN) is a binding site for phosphoenolpyruvate. UDP-N-acetyl-alpha-D-glucosamine is bound at residue Arg-94. The Proton donor role is filled by Cys-118. Cys-118 is modified (2-(S-cysteinyl)pyruvic acid O-phosphothioketal). UDP-N-acetyl-alpha-D-glucosamine contacts are provided by residues 123–127 (RPVDL), 163–166 (KVSV), Asp-308, and Ile-330.

It belongs to the EPSP synthase family. MurA subfamily.

Its subcellular location is the cytoplasm. It catalyses the reaction phosphoenolpyruvate + UDP-N-acetyl-alpha-D-glucosamine = UDP-N-acetyl-3-O-(1-carboxyvinyl)-alpha-D-glucosamine + phosphate. It functions in the pathway cell wall biogenesis; peptidoglycan biosynthesis. Functionally, cell wall formation. Adds enolpyruvyl to UDP-N-acetylglucosamine. The protein is UDP-N-acetylglucosamine 1-carboxyvinyltransferase of Yersinia enterocolitica serotype O:8 / biotype 1B (strain NCTC 13174 / 8081).